The sequence spans 322 residues: Phosphatidylglycerol--prolipoprotein diacylglyceryl transferase (322 aa).

A run of 3 helical transmembrane segments spans residues 23-43, 53-73, and 97-117; these read VYPI…AFFW, FFAL…LWFV, and GLSI…YIYF. Arg143 provides a ligand contact to a 1,2-diacyl-sn-glycero-3-phospho-(1'-sn-glycerol). 2 helical membrane passes run 191-211 and 250-270; these read PLFL…VWII and LAAM…EIWA.

It belongs to the Lgt family.

The protein resides in the cell membrane. The enzyme catalyses L-cysteinyl-[prolipoprotein] + a 1,2-diacyl-sn-glycero-3-phospho-(1'-sn-glycerol) = an S-1,2-diacyl-sn-glyceryl-L-cysteinyl-[prolipoprotein] + sn-glycerol 1-phosphate + H(+). It participates in protein modification; lipoprotein biosynthesis (diacylglyceryl transfer). In terms of biological role, catalyzes the transfer of the diacylglyceryl group from phosphatidylglycerol to the sulfhydryl group of the N-terminal cysteine of a prolipoprotein, the first step in the formation of mature lipoproteins. The chain is Phosphatidylglycerol--prolipoprotein diacylglyceryl transferase from Mycoplasmopsis pulmonis (strain UAB CTIP) (Mycoplasma pulmonis).